The sequence spans 129 residues: Small ribosomal subunit protein uS9 (129 aa).

The tract at residues 107-129 is disordered; the sequence is SRTVERKKYGRRKARRSPQFSKR. Residues 114–129 are compositionally biased toward basic residues; that stretch reads KYGRRKARRSPQFSKR.

The protein belongs to the universal ribosomal protein uS9 family.

The sequence is that of Small ribosomal subunit protein uS9 from Campylobacter jejuni subsp. jejuni serotype O:23/36 (strain 81-176).